The sequence spans 332 residues: Cysteine and histidine-rich domain-containing protein 1 (332 aa).

Residue Ala-2 is modified to N-acetylalanine. Residues 2–77 (ALLCYNRGCG…KPPEPVKPEV (76 aa)) are interaction with PPP5C. Residues Cys-5, Cys-10, Cys-24, His-27, Cys-42, and Cys-43 each coordinate Zn(2+). 2 CHORD domains span residues 5-64 (CYNR…KGRH) and 157-216 (CKNG…KGKH). Thr-47 bears the Phosphothreonine mark. Position 51 is a phosphoserine (Ser-51). Zn(2+)-binding residues include Cys-59, His-64, Cys-157, Cys-162, Cys-176, His-179, Cys-194, Cys-195, Cys-211, and His-216. Residues 65–316 (NSEKPPEPVK…AEPMQWASLE (252 aa)) form an interaction with HSP90AA1 and HSP90AB1 region. Positions 227–316 (VVPCRHDWHQ…AEPMQWASLE (90 aa)) constitute a CS domain.

As to quaternary structure, interacts with HSP90AA1, ROCK1 and ROCK2. Interacts with HSP90AB1 and PPP5C. Underexpressed in many breast and lung cancers.

Its function is as follows. Regulates centrosome duplication, probably by inhibiting the kinase activity of ROCK2. Proposed to act as co-chaperone for HSP90. May play a role in the regulation of NOD1 via a HSP90 chaperone complex. In vitro, has intrinsic chaperone activity. This function may be achieved by inhibiting association of ROCK2 with NPM1. Plays a role in ensuring the localization of the tyrosine kinase receptor EGFR to the plasma membrane, and thus ensures the subsequent regulation of EGFR activity and EGF-induced actin cytoskeleton remodeling. Involved in stress response. Prevents tumorigenesis. This chain is Cysteine and histidine-rich domain-containing protein 1 (CHORDC1), found in Homo sapiens (Human).